We begin with the raw amino-acid sequence, 62 residues long: uncharacterized protein (62 aa).

The protein resides in the plastid. The protein localises to the chloroplast. This is an uncharacterized protein from Chlamydomonas reinhardtii (Chlamydomonas smithii).